The following is a 283-amino-acid chain: Transport and Golgi organization protein 2 (283 aa).

The protein belongs to the Tango2 family.

It is found in the cytoplasm. It localises to the mitochondrion. The protein resides in the golgi apparatus. Functionally, may play a role in Golgi organization. This chain is Transport and Golgi organization protein 2 (Tango2), found in Drosophila melanogaster (Fruit fly).